A 464-amino-acid polypeptide reads, in one-letter code: tRNA modification GTPase MnmE (464 aa).

Residues Arg27, Glu89, and Arg128 each contribute to the (6S)-5-formyl-5,6,7,8-tetrahydrofolate site. The TrmE-type G domain occupies 225–384; sequence GLATAIIGHP…LEDRIAAMFF (160 aa). Residue Asn235 coordinates K(+). GTP-binding positions include 235 to 240, 254 to 260, and 279 to 282; these read NVGKSS, TDVAGTT, and DTAG. Ser239 is a Mg(2+) binding site. The K(+) site is built by Thr254, Val256, and Thr259. Residue Thr260 coordinates Mg(2+). Residue Lys464 participates in (6S)-5-formyl-5,6,7,8-tetrahydrofolate binding.

The protein belongs to the TRAFAC class TrmE-Era-EngA-EngB-Septin-like GTPase superfamily. TrmE GTPase family. As to quaternary structure, homodimer. Heterotetramer of two MnmE and two MnmG subunits. K(+) serves as cofactor.

It localises to the cytoplasm. Its function is as follows. Exhibits a very high intrinsic GTPase hydrolysis rate. Involved in the addition of a carboxymethylaminomethyl (cmnm) group at the wobble position (U34) of certain tRNAs, forming tRNA-cmnm(5)s(2)U34. In Pediococcus pentosaceus (strain ATCC 25745 / CCUG 21536 / LMG 10740 / 183-1w), this protein is tRNA modification GTPase MnmE.